Here is a 252-residue protein sequence, read N- to C-terminus: Ribosomal RNA small subunit methyltransferase A (252 aa).

N11, L13, G38, E60, D82, and N99 together coordinate S-adenosyl-L-methionine.

It belongs to the class I-like SAM-binding methyltransferase superfamily. rRNA adenine N(6)-methyltransferase family. RsmA subfamily.

The protein localises to the cytoplasm. The catalysed reaction is adenosine(1518)/adenosine(1519) in 16S rRNA + 4 S-adenosyl-L-methionine = N(6)-dimethyladenosine(1518)/N(6)-dimethyladenosine(1519) in 16S rRNA + 4 S-adenosyl-L-homocysteine + 4 H(+). Functionally, specifically dimethylates two adjacent adenosines (A1518 and A1519) in the loop of a conserved hairpin near the 3'-end of 16S rRNA in the 30S particle. May play a critical role in biogenesis of 30S subunits. The protein is Ribosomal RNA small subunit methyltransferase A of Hydrogenobaculum sp. (strain Y04AAS1).